We begin with the raw amino-acid sequence, 122 residues long: UPF0102 protein NGR_c36770 (122 aa).

The protein belongs to the UPF0102 family.

The chain is UPF0102 protein NGR_c36770 from Sinorhizobium fredii (strain NBRC 101917 / NGR234).